We begin with the raw amino-acid sequence, 180 residues long: Hypoxanthine-guanine phosphoribosyltransferase (180 aa).

Diphosphate-binding residues include K43 and G44. Mg(2+) is bound by residues E99 and D100. D103 functions as the Proton acceptor in the catalytic mechanism. GMP contacts are provided by residues K131, 152–153, and D159; that span reads FI. Residue R165 coordinates diphosphate.

Belongs to the purine/pyrimidine phosphoribosyltransferase family. Mg(2+) serves as cofactor.

The protein localises to the cytoplasm. The enzyme catalyses IMP + diphosphate = hypoxanthine + 5-phospho-alpha-D-ribose 1-diphosphate. It catalyses the reaction GMP + diphosphate = guanine + 5-phospho-alpha-D-ribose 1-diphosphate. The protein operates within purine metabolism; IMP biosynthesis via salvage pathway; IMP from hypoxanthine: step 1/1. Its pathway is purine metabolism; GMP biosynthesis via salvage pathway; GMP from guanine: step 1/1. Purine salvage pathway enzyme that catalyzes the transfer of the ribosyl-5-phosphate group from 5-phospho-alpha-D-ribose 1-diphosphate (PRPP) to the N9 position of the 6-oxopurines hypoxanthine and guanine to form the corresponding ribonucleotides IMP (inosine 5'-monophosphate) and GMP (guanosine 5'-monophosphate), with the release of PPi. The polypeptide is Hypoxanthine-guanine phosphoribosyltransferase (hpt) (Streptococcus mutans serotype c (strain ATCC 700610 / UA159)).